Consider the following 445-residue polypeptide: Peptide chain release factor 1, mitochondrial (445 aa).

Residues 1-61 constitute a mitochondrion transit peptide; it reads MNRHLCVWLF…LLSKNWSRRY (61 aa). The tract at residues 297-361 is GGQ domain; sequence PKDLRIDTFR…LRARLYQQII (65 aa). The GGQ signature appears at 311–313; the sequence is GGQ. Q313 is subject to N5-methylglutamine.

Belongs to the prokaryotic/mitochondrial release factor family. Post-translationally, methylation of glutamine in the GGQ triplet by HEMK1 is conserved from bacteria to mammals.

It is found in the mitochondrion. Functionally, mitochondrial peptide chain release factor that directs the termination of translation in response to the peptide chain non-canonical stop codons AGG and AGA. Non-canonical termination codons AGG and AGA are found at the end of MT-CO1/COX1 and MT-ND6/ND6 open reading frames, respectively. Recognizes non-canonical stop codons via a network of interactions between the codon, MTRF1 and the ribosomal RNA (rRNA): in contrast to other translation release factors, which identify the codon in the A-site via direct interactions of amino acid side chains with the bases, MTRF1 repositions the first 2 bases of the stop codon to use an intricate network of interactions that includes residues of the release factor, the rRNA of the small ribosomal subunit, as well as neighboring bases of the mRNA. This Homo sapiens (Human) protein is Peptide chain release factor 1, mitochondrial.